A 54-amino-acid polypeptide reads, in one-letter code: Rubredoxin (54 aa).

A Rubredoxin-like domain is found at 2 to 52 (AKWVCKICGYIYDEDAGDPDNGISPGTKFEELPDDWVCPICGAPKSEFEKL). Fe cation contacts are provided by C6, C9, C39, and C42.

The protein belongs to the rubredoxin family. Requires Fe(3+) as cofactor.

In terms of biological role, rubredoxin is a small nonheme, iron protein lacking acid-labile sulfide. Its single Fe, chelated to 4 Cys, functions as an electron acceptor and may also stabilize the conformation of the molecule. The sequence is that of Rubredoxin (rub) from Pyrococcus furiosus (strain ATCC 43587 / DSM 3638 / JCM 8422 / Vc1).